The sequence spans 205 residues: MSVVFVAASKLPTPFGEFTMHGFLDEESGKEHVALTMGDIADGAPVLGRLHSECLTGDALFSLRCDCGFQLEGALAAIAEEGRGVLLYLRQEGRGIGLLNKIRAYELQDGGADTVEANLQLGFGADQRDYAMCQPMLAHLGVSSLRLMTNNPRKVKALESYAVTVAERVPLQKGLNKHNRRYLATKAGKLGHMLGSLHQGEAETT.

49-53 provides a ligand contact to GTP; the sequence is RLHSE. The Zn(2+) site is built by Cys-54, Cys-65, and Cys-67. GTP is bound by residues Gln-70, 92–94, and Thr-114; that span reads EGR. Asp-126 (proton acceptor) is an active-site residue. The Nucleophile role is filled by Arg-128. Residues Thr-149 and Lys-154 each contribute to the GTP site.

The protein belongs to the GTP cyclohydrolase II family. It depends on Zn(2+) as a cofactor.

It catalyses the reaction GTP + 4 H2O = 2,5-diamino-6-hydroxy-4-(5-phosphoribosylamino)-pyrimidine + formate + 2 phosphate + 3 H(+). It functions in the pathway cofactor biosynthesis; riboflavin biosynthesis; 5-amino-6-(D-ribitylamino)uracil from GTP: step 1/4. Catalyzes the conversion of GTP to 2,5-diamino-6-ribosylamino-4(3H)-pyrimidinone 5'-phosphate (DARP), formate and pyrophosphate. The polypeptide is GTP cyclohydrolase-2 (Pseudomonas paraeruginosa (strain DSM 24068 / PA7) (Pseudomonas aeruginosa (strain PA7))).